We begin with the raw amino-acid sequence, 267 residues long: CD82 antigen (267 aa).

At 1-11 (MGSACIKVTKY) the chain is on the cytoplasmic side. A lipid anchor (S-palmitoyl cysteine) is attached at Cys5. A helical membrane pass occupies residues 12-32 (FLFLFNLIFFILGAVILGFGV). Residues 33–53 (WILADKSSFISVLQTSSSSLR) are Extracellular-facing. A helical transmembrane segment spans residues 54–72 (MGAYVFIGVGAVTMLMGFL). The Cytoplasmic segment spans residues 73–83 (GCIGAVNEVRC). Cys74 is lipidated: S-palmitoyl cysteine. Residues 84–110 (LLGLYFAFLLLILIAQVTAGALFYFNM) form a helical membrane-spanning segment. The Extracellular segment spans residues 111–228 (GKLKQEMGGI…KVQAWLQENL (118 aa)). N-linked (GlcNAc...) asparagine glycosylation is found at Asn129, Asn157, and Asn198. A helical membrane pass occupies residues 229 to 250 (GIILGVGVGVAIIELLGMVLSI). Topologically, residues 251–267 (CLCRHVHSEDYSKVPKY) are cytoplasmic.

It belongs to the tetraspanin (TM4SF) family. Forms homooligomers. Interacts directly with IGSF8. Interacts with EGFR. Interacts with VEGFA and PDGFB. Interacts with ITGA4. Interacts with ITGA6; this interaction reduces ITGA6 cell surface expression. Interacts with ITGB1. Interacts with TLR4; this interaction inhibits TLR4-mediated signaling pathway. Interacts with TLR9. Interacts with PLAUR. Palmitoylated. Palmitoylation contributes to oligomerization and surface expression. Lymphoid specific.

The protein resides in the cell membrane. It localises to the cytoplasmic vesicle. Its subcellular location is the phagosome. Its function is as follows. Structural component of specialized membrane microdomains known as tetraspanin-enriched microdomains (TERMs), which act as platforms for receptor clustering and signaling. Participates thereby in diverse biological functions such as cell signal transduction, adhesion, migration and protein trafficking. Acts as a attenuator of EGF signaling, facilitating ligand-induced endocytosis of the receptor and its subsequent desensitization. Mechanistically, modulates ligand-induced ubiquitination and trafficking of EGFR via E3 ligase CBL phosphorylation by PKC. Increases cell-matrix adhesion by regulating the membrane organization of integrin alpha4/ITA4. Modulates adhesion and suppresses cell migration through other integrins such as the alpha6/ITGA6 and beta1/ITGB1. Decreases cell-associated plasminogen activation by interfering with the interaction between urokinase-type plasminogen activator/PLAU and its receptor PLAUR. Associates with CD4 or CD8 and delivers costimulatory signals for the TCR/CD3 pathway. Plays a role in TLR9 trafficking to acidified CpG-containing compartments by controlling interaction between TLR9 and VAMP3 and subsequent myddosome assembly. Inhibits LPS-induced inflammatory response by preventing binding of LPS to TLR4 on the cell surface. Plays a role in the activation of macrophages into anti-inflammatory phenotypes. Independently of Toll-like receptor (TLR) signaling, is recruited to pathogen-containing phagosomes prior to fusion with lysosomes and thereby participates in antigen presentation. Also acts to control angiogenesis and switch angiogenic milieu to quiescent state by binding and sequestering VEGFA and PDGFB to inhibit the signaling they trigger via their respective cell surface receptor. This Homo sapiens (Human) protein is CD82 antigen (CD82).